Here is a 356-residue protein sequence, read N- to C-terminus: Peptide chain release factor 1 (356 aa).

Gln233 carries the N5-methylglutamine modification.

Belongs to the prokaryotic/mitochondrial release factor family. Methylated by PrmC. Methylation increases the termination efficiency of RF1.

The protein localises to the cytoplasm. Functionally, peptide chain release factor 1 directs the termination of translation in response to the peptide chain termination codons UAG and UAA. The chain is Peptide chain release factor 1 from Shouchella clausii (strain KSM-K16) (Alkalihalobacillus clausii).